The following is a 147-amino-acid chain: Small ribosomal subunit protein uS12 (147 aa).

It belongs to the universal ribosomal protein uS12 family. Part of the 30S ribosomal subunit.

Functionally, with S4 and S5 plays an important role in translational accuracy. Located at the interface of the 30S and 50S subunits. This chain is Small ribosomal subunit protein uS12, found in Methanococcus aeolicus (strain ATCC BAA-1280 / DSM 17508 / OCM 812 / Nankai-3).